A 635-amino-acid chain; its full sequence is DNA primase (635 aa).

A CHC2-type zinc finger spans residues 41–65 (CPFHDEKSPSFSVSPAKQMYYCFGC). The Toprim domain maps to 265-348 (DEAILVEGYF…SGQVNLRILN (84 aa)). The Mg(2+) site is built by Glu-271, Asp-317, and Asp-319.

It belongs to the DnaG primase family. Monomer. Interacts with DnaB. Requires Zn(2+) as cofactor. It depends on Mg(2+) as a cofactor.

The catalysed reaction is ssDNA + n NTP = ssDNA/pppN(pN)n-1 hybrid + (n-1) diphosphate.. RNA polymerase that catalyzes the synthesis of short RNA molecules used as primers for DNA polymerase during DNA replication. The chain is DNA primase from Synechocystis sp. (strain ATCC 27184 / PCC 6803 / Kazusa).